Consider the following 521-residue polypeptide: MIKQALISVSDKTGIVDFAKSLSDLGVKLLSTGGTAKLLADAGLPVTEVADYTGFPEMLDGRVKTLHPKVHGGILARRDLPEHMQALEQHDIPTIDLLVVNLYPFVATIAKDDCTLADAIENIDIGGPTMLRSAAKNHRDVTVVVDPADYAVVLDEMKANGNAIGYATNFRLATKVFAHTAQYDGAITNYLTSLTDELQHASRSTYPATLNLAFDKVQDLRYGENPHQSAAFYRDLAAPAGALANYRQLQGKELSYNNIADSDAAWECVKTFDAPACVIIKHANPCGVAVGNDPADAYAKAFQTDPTSAFGGIIAFNREVDEAAAQAVAKQFVEVLIAPSFSAAAQQVFAAKQNVRLLEIALGDGHNAFDLKRVGGGLLVQSLDSRNVQPSELRVVTKRQPSAKEMDDLLFAWRVAKYVKSNAIVFCGNGMTLGVGAGQMSRVDSARIASIKAQNAGLTLAGSAVASDAFFPFRDGLDVVVAAGATCVIQPGGSMRDDEVIAAADEHGIAMVLTGVRHFRH.

The region spanning 1–145 is the MGS-like domain; it reads MIKQALISVS…KNHRDVTVVV (145 aa).

This sequence belongs to the PurH family.

The enzyme catalyses (6R)-10-formyltetrahydrofolate + 5-amino-1-(5-phospho-beta-D-ribosyl)imidazole-4-carboxamide = 5-formamido-1-(5-phospho-D-ribosyl)imidazole-4-carboxamide + (6S)-5,6,7,8-tetrahydrofolate. It carries out the reaction IMP + H2O = 5-formamido-1-(5-phospho-D-ribosyl)imidazole-4-carboxamide. Its pathway is purine metabolism; IMP biosynthesis via de novo pathway; 5-formamido-1-(5-phospho-D-ribosyl)imidazole-4-carboxamide from 5-amino-1-(5-phospho-D-ribosyl)imidazole-4-carboxamide (10-formyl THF route): step 1/1. It participates in purine metabolism; IMP biosynthesis via de novo pathway; IMP from 5-formamido-1-(5-phospho-D-ribosyl)imidazole-4-carboxamide: step 1/1. In Burkholderia vietnamiensis (strain G4 / LMG 22486) (Burkholderia cepacia (strain R1808)), this protein is Bifunctional purine biosynthesis protein PurH.